The following is a 908-amino-acid chain: NADH-quinone oxidoreductase subunit G (908 aa).

A 2Fe-2S ferredoxin-type domain is found at 2–83 (ATIHVDGKEY…GTFISIDDEE (82 aa)). 4 residues coordinate [2Fe-2S] cluster: Cys-34, Cys-45, Cys-48, and Cys-67. Positions 83-122 (EAKQFRESVVEWLMTNHPHDCPVCEEGGNCHLQDMTVMTG) constitute a 4Fe-4S His(Cys)3-ligated-type domain. The [4Fe-4S] cluster site is built by His-99, Cys-103, Cys-106, Cys-112, Cys-151, Cys-154, Cys-157, Cys-201, Cys-228, Cys-231, Cys-235, and Cys-263. In terms of domain architecture, 4Fe-4S Mo/W bis-MGD-type spans 221–277 (MQFAPSICQQCSIGCNISPGERYGELRRIENRYNGTVNHYFLCDRGRFGYGYVNLKD).

It belongs to the complex I 75 kDa subunit family. In terms of assembly, composed of 13 different subunits. Subunits NuoCD, E, F, and G constitute the peripheral sector of the complex. [2Fe-2S] cluster is required as a cofactor. It depends on [4Fe-4S] cluster as a cofactor.

It carries out the reaction a quinone + NADH + 5 H(+)(in) = a quinol + NAD(+) + 4 H(+)(out). Its function is as follows. NDH-1 shuttles electrons from NADH, via FMN and iron-sulfur (Fe-S) centers, to quinones in the respiratory chain. The immediate electron acceptor for the enzyme in this species is believed to be ubiquinone. Couples the redox reaction to proton translocation (for every two electrons transferred, four hydrogen ions are translocated across the cytoplasmic membrane), and thus conserves the redox energy in a proton gradient. This Escherichia coli O6:H1 (strain CFT073 / ATCC 700928 / UPEC) protein is NADH-quinone oxidoreductase subunit G (nuoG).